A 213-amino-acid polypeptide reads, in one-letter code: Cytochrome c biogenesis ATP-binding export protein CcmA (213 aa).

The ABC transporter domain maps to 3-211; that stretch reads LTAENLGVRR…QMTGFAGVET (209 aa). Residue 35 to 42 coordinates ATP; it reads GRNGSGKS.

It belongs to the ABC transporter superfamily. CcmA exporter (TC 3.A.1.107) family. The complex is composed of two ATP-binding proteins (CcmA) and two transmembrane proteins (CcmB).

Its subcellular location is the cell inner membrane. The catalysed reaction is heme b(in) + ATP + H2O = heme b(out) + ADP + phosphate + H(+). Part of the ABC transporter complex CcmAB involved in the biogenesis of c-type cytochromes; once thought to export heme, this seems not to be the case, but its exact role is uncertain. Responsible for energy coupling to the transport system. The protein is Cytochrome c biogenesis ATP-binding export protein CcmA of Agrobacterium fabrum (strain C58 / ATCC 33970) (Agrobacterium tumefaciens (strain C58)).